The sequence spans 405 residues: Sesquiterpene synthase 16 (405 aa).

Residues D155, D159, and E309 each contribute to the Mg(2+) site. The short motif at 155–159 (DDTYD) is the DDXXD motif element.

It belongs to the terpene synthase family. Tpsa subfamily. Mg(2+) is required as a cofactor. The cofactor is Mn(2+).

It participates in secondary metabolite biosynthesis; terpenoid biosynthesis. Functionally, sesquiterpene synthase involved in the biosynthesis of volatile compounds. No activity detected with geranyl diphosphate (GPP) and farnesyl diphosphate (FPP) as substrates. The protein is Sesquiterpene synthase 16 of Solanum habrochaites (Wild tomato).